A 561-amino-acid polypeptide reads, in one-letter code: Type 2 DNA topoisomerase 6 subunit B (561 aa).

ATP-binding positions include N46, D78, 99–100, 109–116, and K471; these read TK and GQQGIGIS.

The protein belongs to the TOP6B family. Homodimer. Heterotetramer of two Top6A and two Top6B chains.

It carries out the reaction ATP-dependent breakage, passage and rejoining of double-stranded DNA.. Functionally, relaxes both positive and negative superturns and exhibits a strong decatenase activity. The sequence is that of Type 2 DNA topoisomerase 6 subunit B from Thermococcus gammatolerans (strain DSM 15229 / JCM 11827 / EJ3).